The following is a 156-amino-acid chain: ATP synthase subunit b (156 aa).

The helical transmembrane segment at 7 to 27 threads the bilayer; sequence FFAQMVVFFILWWVVAKFIWP.

This sequence belongs to the ATPase B chain family. As to quaternary structure, F-type ATPases have 2 components, F(1) - the catalytic core - and F(0) - the membrane proton channel. F(1) has five subunits: alpha(3), beta(3), gamma(1), delta(1), epsilon(1). F(0) has three main subunits: a(1), b(2) and c(10-14). The alpha and beta chains form an alternating ring which encloses part of the gamma chain. F(1) is attached to F(0) by a central stalk formed by the gamma and epsilon chains, while a peripheral stalk is formed by the delta and b chains.

Its subcellular location is the cell inner membrane. Functionally, f(1)F(0) ATP synthase produces ATP from ADP in the presence of a proton or sodium gradient. F-type ATPases consist of two structural domains, F(1) containing the extramembraneous catalytic core and F(0) containing the membrane proton channel, linked together by a central stalk and a peripheral stalk. During catalysis, ATP synthesis in the catalytic domain of F(1) is coupled via a rotary mechanism of the central stalk subunits to proton translocation. Its function is as follows. Component of the F(0) channel, it forms part of the peripheral stalk, linking F(1) to F(0). In Cupriavidus necator (strain ATCC 17699 / DSM 428 / KCTC 22496 / NCIMB 10442 / H16 / Stanier 337) (Ralstonia eutropha), this protein is ATP synthase subunit b.